The chain runs to 129 residues: Follitropin subunit beta (129 aa).

A signal peptide spans 1–18 (MKTVQFCFLFCCWKAICC). 6 disulfides stabilise this stretch: Cys-21–Cys-69, Cys-35–Cys-84, Cys-38–Cys-122, Cys-46–Cys-100, Cys-50–Cys-102, and Cys-105–Cys-112. Residues Asn-25 and Asn-42 are each glycosylated (N-linked (GlcNAc...) asparagine).

Belongs to the glycoprotein hormones subunit beta family. As to quaternary structure, heterodimer. The active follitropin is a heterodimer composed of an alpha chain/CGA shared with other hormones and a unique beta chain/FSHB shown here.

Its subcellular location is the secreted. Functionally, together with the alpha chain CGA constitutes follitropin, the follicle-stimulating hormone, and provides its biological specificity to the hormone heterodimer. Binds FSHR, a G protein-coupled receptor, on target cells to activate downstream signaling pathways. Follitropin is involved in follicle development and spermatogenesis in reproductive organs. In Macaca fascicularis (Crab-eating macaque), this protein is Follitropin subunit beta (FSHB).